A 633-amino-acid chain; its full sequence is Shootin-1 (633 aa).

Residue Met1 is modified to N-acetylmethionine. Phosphoserine occurs at positions 3 and 4. Positions 7–353 (EKQLQLITSL…RVNQSENSVP (347 aa)) form a coiled coil. A phosphoserine; by PAK1 mark is found at Ser101 and Ser249. The interval 343–508 (KRVNQSENSV…LATSESKSMP (166 aa)) is disordered. Residues 352–369 (VPPPPPPPPPLPPPPPNP) show a composition bias toward pro residues. Ser375 carries the post-translational modification Phosphoserine. Positions 403 to 418 (TDLKRQAVEEMMDRIK) are enriched in basic and acidic residues. Positions 456 to 465 (LNKSTSSRSL) are enriched in polar residues. Phosphoserine is present on Ser473. Phosphothreonine is present on Thr487. Residues 490 to 505 (ADSSSPTGILATSESK) are compositionally biased toward polar residues. A Phosphoserine modification is found at Ser494. Residue Thr496 is modified to Phosphothreonine. Ser506 and Ser515 each carry phosphoserine. The interval 525–633 (TLEAEFNNPC…KTGETDSSNC (109 aa)) is disordered. A Phosphothreonine modification is found at Thr537. The segment covering 550–559 (CTNSKVTFQP) has biased composition (polar residues). Residues 590–621 (PQTKDQAAEKDPTQCKEEERGETQPEFKEDSS) are compositionally biased toward basic and acidic residues.

The protein belongs to the shootin family. In terms of assembly, interacts with PFN2. Interacts (via N-terminus) with KIF20B; this interaction is direct and promotes the association of SHTN1 to microtubules in primary neurons. Associates with microtubule. Interacts with L1CAM; this interaction occurs in axonal growth cones. Interacts with actin filament retrograde flow; this interaction is enhanced in a netrin-1- and PAK1-dependent manner and promotes F-actin-substrate coupling and concomitant formation of traction forces at axonal growth cones. Interacts with RUFY3. Post-translationally, phosphorylated on Ser-101 and Ser-249 by PAK1 through a CDC42- and RAC1-dependent signaling pathway, which enhances its association with F-actin retrograde flow in filopodia and lamellipodia of axonal growth cones. Phosphorylation on Ser-101 and Ser-249 is increased by netrin-1. As to expression, brain-specific (at protein level). Expressed in hippocampal neurons.

Its subcellular location is the perikaryon. The protein resides in the cell projection. It is found in the axon. It localises to the growth cone. The protein localises to the cytoplasm. Its subcellular location is the cytoskeleton. The protein resides in the filopodium. It is found in the lamellipodium. Its function is as follows. Involved in the generation of internal asymmetric signals required for neuronal polarization and neurite outgrowth. Mediates netrin-1-induced F-actin-substrate coupling or 'clutch engagement' within the axon growth cone through activation of CDC42, RAC1 and PAK1-dependent signaling pathway, thereby converting the F-actin retrograde flow into traction forces, concomitantly with filopodium extension and axon outgrowth. Plays a role in cytoskeletal organization by regulating the subcellular localization of phosphoinositide 3-kinase (PI3K) activity at the axonal growth cone. Also plays a role in regenerative neurite outgrowth. In the developing cortex, cooperates with KIF20B to promote both the transition from the multipolar to the bipolar stage and the radial migration of cortical neurons from the ventricular zone toward the superficial layer of the neocortex. Involved in the accumulation of phosphatidylinositol 3,4,5-trisphosphate (PIP3) in the growth cone of primary hippocampal neurons. This is Shootin-1 from Rattus norvegicus (Rat).